A 135-amino-acid chain; its full sequence is Large ribosomal subunit protein uL16c (135 aa).

It belongs to the universal ribosomal protein uL16 family. Part of the 50S ribosomal subunit.

The protein resides in the plastid. The protein localises to the chloroplast. The sequence is that of Large ribosomal subunit protein uL16c from Lactuca sativa (Garden lettuce).